The primary structure comprises 745 residues: Arf-GAP with coiled-coil, ANK repeat and PH domain-containing protein 1 (745 aa).

The BAR domain occupies 1 to 226 (MTVKLDFEEC…RKELGGQLHQ (226 aa)). Positions 1-382 (MTVKLDFEEC…RGLGQGSGHL (382 aa)) are required for formation of endosomal tubules when overexpressed with PIP5K1C. Residues 265–360 (GLVMEGHLFK…WVSAVQSSIA (96 aa)) form the PH domain. One can recognise an Arf-GAP domain in the interval 405–527 (GHVAAQVQSV…KFLTKLPEIR (123 aa)). Residues 405–745 (GHVAAQVQSV…SRRSHDLHTL (341 aa)) are required for interaction with GULP1. The C4-type zinc-finger motif lies at 420-443 (CCDCREPAPEWASINLGVTLCIQC). The residue at position 485 (Tyr485) is a 3'-nitrotyrosine. The tract at residues 525 to 567 (EIRGRRGGRGPPRGHPPVPPKPGLIRPKPGSFRSKPEPPSEDL) is prevents interaction with ITGB1 when S-554 is not phosphorylated. The interval 525-569 (EIRGRRGGRGPPRGHPPVPPKPGLIRPKPGSFRSKPEPPSEDLQS) is disordered. A compositionally biased stretch (pro residues) spans 537 to 546 (RGHPPVPPKP). Ser555 carries the post-translational modification Phosphoserine; by PKB. ANK repeat units follow at residues 607-640 (ENATPLIQATAAVRVLNSLLACEFLLQNGANVNQ), 644-673 (QGRGPLHHATILGHTGLACLFLKRGADLGV), and 677-707 (EGRDPLTIAVETANADIVTLLRLAKMREADA).

Banana-shaped homodimer laterally assembling into tetramers, the tetramers further pack helically onto the membrane. Interacts with GTP-bound ARF6. Interacts with third cytoplasmic loop of SLC2A4/GLUT4. Interacts with CLTC. Interacts with GULP1. Forms a complex with GDP-bound ARF6 and GULP1. Interacts with ITGB1; required for ITGB1 recycling. Post-translationally, phosphorylation at Ser-555 by PKB is required for interaction with ITGB1, export of ITGB1 from recycling endosomes to the cell surface and ITGB1-dependent cell migration.

It is found in the recycling endosome membrane. GAP activity stimulated by phosphatidylinositol 4,5-bisphosphate (PIP2) and phosphatidic acid. Its function is as follows. GTPase-activating protein (GAP) for ADP ribosylation factor 6 (ARF6) required for clathrin-dependent export of proteins from recycling endosomes to trans-Golgi network and cell surface. Required for regulated export of ITGB1 from recycling endosomes to the cell surface and ITGB1-dependent cell migration. The polypeptide is Arf-GAP with coiled-coil, ANK repeat and PH domain-containing protein 1 (ACAP1) (Bos taurus (Bovine)).